Here is a 689-residue protein sequence, read N- to C-terminus: Glycine--tRNA ligase beta subunit (689 aa).

It belongs to the class-II aminoacyl-tRNA synthetase family. As to quaternary structure, tetramer of two alpha and two beta subunits.

Its subcellular location is the cytoplasm. The catalysed reaction is tRNA(Gly) + glycine + ATP = glycyl-tRNA(Gly) + AMP + diphosphate. In Klebsiella pneumoniae subsp. pneumoniae (strain ATCC 700721 / MGH 78578), this protein is Glycine--tRNA ligase beta subunit.